The following is a 189-amino-acid chain: dTTP/UTP pyrophosphatase (189 aa).

The Proton acceptor role is filled by aspartate 70. Residues cysteine 74 and cysteine 79 are joined by a disulfide bond.

This sequence belongs to the Maf family. YhdE subfamily. Homodimer. Requires a divalent metal cation as cofactor.

It is found in the cytoplasm. It carries out the reaction dTTP + H2O = dTMP + diphosphate + H(+). The enzyme catalyses UTP + H2O = UMP + diphosphate + H(+). It catalyses the reaction CTP + H2O = CMP + diphosphate + H(+). The catalysed reaction is psi-UTP + H2O = psi-UMP + diphosphate + H(+). It carries out the reaction 5-methyl-CTP + H2O = 5-methyl-CMP + diphosphate + H(+). The enzyme catalyses 5-methyl-UTP + H2O = 5-methyl-UMP + diphosphate + H(+). Functionally, nucleoside triphosphate pyrophosphatase that hydrolyzes dTTP and UTP. Can also hydrolyze CTP and the modified nucleotides pseudo-UTP, 5-methyl-CTP (m(5)CTP) and 5-methyl-UTP (m(5)UTP). May have a dual role in cell division arrest and in preventing the incorporation of modified nucleotides into cellular nucleic acids. The polypeptide is dTTP/UTP pyrophosphatase (Bacillus subtilis (strain 168)).